Here is a 158-residue protein sequence, read N- to C-terminus: Large ribosomal subunit protein uL16 (158 aa).

This sequence belongs to the universal ribosomal protein uL16 family. Part of the 50S ribosomal subunit.

In terms of biological role, binds 23S rRNA and is also seen to make contacts with the A and possibly P site tRNAs. The chain is Large ribosomal subunit protein uL16 from Synechococcus sp. (strain CC9605).